Here is a 222-residue protein sequence, read N- to C-terminus: Protein GrpE (222 aa).

Positions 1–82 (MSDFNKDEYL…KADDTLTPLG (82 aa)) are disordered. Residues 20–71 (SGQAAPAAASADSAAAAAGATQEGAAQPAAAQSQENGDSAAADGADKAGAAD) are compositionally biased toward low complexity.

Belongs to the GrpE family. Homodimer.

Its subcellular location is the cytoplasm. Participates actively in the response to hyperosmotic and heat shock by preventing the aggregation of stress-denatured proteins, in association with DnaK and GrpE. It is the nucleotide exchange factor for DnaK and may function as a thermosensor. Unfolded proteins bind initially to DnaJ; upon interaction with the DnaJ-bound protein, DnaK hydrolyzes its bound ATP, resulting in the formation of a stable complex. GrpE releases ADP from DnaK; ATP binding to DnaK triggers the release of the substrate protein, thus completing the reaction cycle. Several rounds of ATP-dependent interactions between DnaJ, DnaK and GrpE are required for fully efficient folding. In Bifidobacterium adolescentis (strain ATCC 15703 / DSM 20083 / NCTC 11814 / E194a), this protein is Protein GrpE.